We begin with the raw amino-acid sequence, 223 residues long: Small ribosomal subunit protein uS3 (223 aa).

The region spanning 39 to 108 (IRNFVKKNSY…NILINIVEVK (70 aa)) is the KH type-2 domain.

This sequence belongs to the universal ribosomal protein uS3 family. As to quaternary structure, part of the 30S ribosomal subunit. Forms a tight complex with proteins S10 and S14.

Binds the lower part of the 30S subunit head. Binds mRNA in the 70S ribosome, positioning it for translation. This chain is Small ribosomal subunit protein uS3, found in Clostridium botulinum (strain Hall / ATCC 3502 / NCTC 13319 / Type A).